Here is a 101-residue protein sequence, read N- to C-terminus: Urease subunit beta (101 aa).

This sequence belongs to the urease beta subunit family. Heterotrimer of UreA (gamma), UreB (beta) and UreC (alpha) subunits. Three heterotrimers associate to form the active enzyme.

The protein resides in the cytoplasm. It carries out the reaction urea + 2 H2O + H(+) = hydrogencarbonate + 2 NH4(+). It participates in nitrogen metabolism; urea degradation; CO(2) and NH(3) from urea (urease route): step 1/1. The sequence is that of Urease subunit beta from Dinoroseobacter shibae (strain DSM 16493 / NCIMB 14021 / DFL 12).